Here is an 860-residue protein sequence, read N- to C-terminus: LPS-assembly protein LptD (860 aa).

A signal peptide spans 1–21 (MTKRYFSLLAVCSAIATSTFA).

The protein belongs to the LptD family. As to quaternary structure, component of the lipopolysaccharide transport and assembly complex. Interacts with LptE and LptA.

The protein localises to the cell outer membrane. Its function is as follows. Together with LptE, is involved in the assembly of lipopolysaccharide (LPS) at the surface of the outer membrane. This Saccharophagus degradans (strain 2-40 / ATCC 43961 / DSM 17024) protein is LPS-assembly protein LptD.